The primary structure comprises 79 residues: Small ribosomal subunit protein uS17 (79 aa).

This sequence belongs to the universal ribosomal protein uS17 family. As to quaternary structure, part of the 30S ribosomal subunit.

Functionally, one of the primary rRNA binding proteins, it binds specifically to the 5'-end of 16S ribosomal RNA. The protein is Small ribosomal subunit protein uS17 of Paramagnetospirillum magneticum (strain ATCC 700264 / AMB-1) (Magnetospirillum magneticum).